A 129-amino-acid chain; its full sequence is Small ribosomal subunit protein uS11c (129 aa).

Belongs to the universal ribosomal protein uS11 family. In terms of assembly, part of the 30S ribosomal subunit.

The protein localises to the plastid. Its subcellular location is the chloroplast. In Euglena gracilis, this protein is Small ribosomal subunit protein uS11c.